The primary structure comprises 458 residues: Zinc finger protein 239 (458 aa).

A Glycyl lysine isopeptide (Lys-Gly) (interchain with G-Cter in SUMO2) cross-link involves residue Lys108. A Phosphoserine modification is found at Ser191. 9 C2H2-type zinc fingers span residues 207–229 (YECS…QRDH), 235–257 (YKCE…QAVH), 263–285 (YKCD…HAVH), 291–313 (YKCD…QRVH), 319–341 (YECE…QRVH), 347–369 (YKCG…RCIH), 375–397 (YQCY…LRVH), 403–425 (YHCG…QRVH), and 431–453 (YECS…QRVH).

It belongs to the krueppel C2H2-type zinc-finger protein family.

Its subcellular location is the nucleus. Its function is as follows. May be involved in transcriptional regulation. In Pongo abelii (Sumatran orangutan), this protein is Zinc finger protein 239 (ZNF239).